The following is a 62-amino-acid chain: Conotoxin Sr5.7 (62 aa).

A signal peptide spans 1–22 (MRCLPVFVILLLLIASAPSVDA). Residues 23–44 (QLKTKDDVPLASFHDNAKGTQH) constitute a propeptide that is removed on maturation.

It belongs to the conotoxin T superfamily. In terms of processing, contains 2 disulfide bonds that can be either 'C1-C3, C2-C4' or 'C1-C4, C2-C3', since these disulfide connectivities have been observed for conotoxins with cysteine framework V (for examples, see AC P0DQQ7 and AC P81755). Expressed by the venom duct.

It is found in the secreted. The polypeptide is Conotoxin Sr5.7 (Conus spurius (Alphabet cone)).